The primary structure comprises 126 residues: UPF0538 protein C2orf76 homolog (126 aa).

Belongs to the UPF0538 family.

The polypeptide is UPF0538 protein C2orf76 homolog (Pongo abelii (Sumatran orangutan)).